A 381-amino-acid chain; its full sequence is Creatine kinase B-type (381 aa).

Positions 11-98 constitute a Phosphagen kinase N-terminal domain; sequence KMKYSVDDEY…FDPVIEDRHG (88 aa). Valine 72 provides a ligand contact to creatine. The region spanning 125–367 is the Phosphagen kinase C-terminal domain; sequence YVLSSRVRTG…KLLIEMEKRL (243 aa). ATP-binding positions include 128–132, arginine 130, arginine 132, and histidine 191; that span reads SSRVR. Glutamate 232 is a creatine binding site. Arginine 236 is an ATP binding site. Threonine 282 is subject to Phosphothreonine; by autocatalysis. Serine 285 serves as a coordination point for creatine. Serine 285 carries the post-translational modification Phosphoserine; by autocatalysis. Residue threonine 289 is modified to Phosphothreonine; by autocatalysis. Residues arginine 292, arginine 320, 320 to 325, and aspartate 335 each bind ATP; that span reads RGTGGV.

It belongs to the ATP:guanido phosphotransferase family. In terms of assembly, dimer of identical or non-identical chains, which can be either B (brain type) or M (muscle type). With MM being the major form in skeletal muscle and myocardium, MB existing in myocardium, and BB existing in many tissues, especially brain. In terms of processing, ba-CK and Bb-CK are phosphorylated. The N-terminus of BA-CK is blocked. Expressed in almost all tissues and found enriched in various region of the brain, retina, heart, gizzard, gut and sperm.

It is found in the cytoplasm. Its subcellular location is the cytosol. It localises to the mitochondrion. The protein resides in the cell membrane. The catalysed reaction is creatine + ATP = N-phosphocreatine + ADP + H(+). Its function is as follows. Reversibly catalyzes the transfer of phosphate between ATP and various phosphogens (e.g. creatine phosphate). Creatine kinase isoenzymes play a central role in energy transduction in tissues with large, fluctuating energy demands, such as skeletal muscle, heart, brain and spermatozoa. The polypeptide is Creatine kinase B-type (Gallus gallus (Chicken)).